A 399-amino-acid polypeptide reads, in one-letter code: F420-dependent formate dehydrogenase subunit beta (399 aa).

4Fe-4S ferredoxin-type domains follow at residues 287-307 (TEYM…EACP) and 339-367 (ERML…LAKI). Residues Cys-296, Cys-299, Cys-302, Cys-306, Cys-348, Cys-351, Cys-354, and Cys-358 each coordinate [4Fe-4S] cluster.

This sequence belongs to the FrhB family. Dimer of an alpha (FdhA) and a beta (FdhB) subunit. It depends on [4Fe-4S] cluster as a cofactor. FAD is required as a cofactor. The cofactor is Zn(2+).

It catalyses the reaction oxidized coenzyme F420-(gamma-L-Glu)(n) + formate + 2 H(+) = reduced coenzyme F420-(gamma-L-Glu)(n) + CO2. Its activity is regulated as follows. Is extremely sensitive to oxygen. Contains a FAD that is required for coenzyme F420-dependent activity but not for methyl viologen-dependent activity. Preincubation of the FAD-depleted enzyme with FAD restores coenzyme F420-dependent activity. Neither FMN nor FADH2 can replace FAD. Strongly inhibited by cyanide, azide, alpha,alpha-dipyridyl and 1,10-phenanthroline. In terms of biological role, catalyzes the oxidation of formate to carbon dioxide, with coenzyme F420 as the electron acceptor. In vitro can also use methyl viologen, 7,8-didemethyl-8-hydroxy-5-deazariboflavin (or FO, a hydrolytic derivative of coenzyme F420), FMN and FAD as electron acceptors, but not NAD(+) or NADP(+). The polypeptide is F420-dependent formate dehydrogenase subunit beta (Methanobacterium formicicum).